The sequence spans 284 residues: UDP-N-acetylenolpyruvoylglucosamine reductase (284 aa).

The 160-residue stretch at 21–180 (KIGGPARLFV…LKAAFKLKKA (160 aa)) folds into the FAD-binding PCMH-type domain. Arg-159 is a catalytic residue. The active-site Proton donor is the Ser-209. Glu-280 is a catalytic residue.

The protein belongs to the MurB family. It depends on FAD as a cofactor.

Its subcellular location is the cytoplasm. The enzyme catalyses UDP-N-acetyl-alpha-D-muramate + NADP(+) = UDP-N-acetyl-3-O-(1-carboxyvinyl)-alpha-D-glucosamine + NADPH + H(+). The protein operates within cell wall biogenesis; peptidoglycan biosynthesis. In terms of biological role, cell wall formation. The chain is UDP-N-acetylenolpyruvoylglucosamine reductase from Pseudothermotoga lettingae (strain ATCC BAA-301 / DSM 14385 / NBRC 107922 / TMO) (Thermotoga lettingae).